Consider the following 589-residue polypeptide: MTKTKGKVVGINGNMISVSFEGLVTLNEVGYVEVGSKKLKSEVIRIRGEVAQLQVFEITKGIKVGDIVEFTGDLLSVELGPGLLGQVYDGLQNPLPELAEQAGYFLERGIYLNALSRTAKWHFTPSAKEGDTLKRADLLGTVPEGSFTHRIMIPFNMYGTYKLKSIKPEGDYTVDDTIAEVTDERGNVIPLTMSFKWPVKRAIDCYAERLKPTETLVTKMRTMDTFFPVAKGGTYCIPGPFGAGKTVLQHATSRNADVDIVIIAACGERAGEVVETLTEFPELKDPKTGRTLMERTIIICNTSSMPVAAREASVYTGVTLAEYYRQMGLDVLLLADSTSRWAQALREMSGRLEEIPGEEAFPAYLESYIAAFYERAGIVRLSDGSKGSVTIGGTVSPAGGNFEEPVTQATLKVVGAFHGLSRERSDARKYPAIHPLDSWSKYPSVLPLEQVKYGRSFLRRGTEVEQMMKVVGEEGTSIEDFIIYLKGDLLDAVYLQQNSFDKVDDAVSVERQQHIYNILIEILGTSFKFVSKDEARSYFSKLKLMFIDYNYSPWGSDAFKSHEDGIKKHIAEKADSLDERAKKLLKQAV.

239-246 contributes to the ATP binding site; that stretch reads GPFGAGKT.

The protein belongs to the ATPase alpha/beta chains family.

It catalyses the reaction ATP + H2O + 4 H(+)(in) = ADP + phosphate + 5 H(+)(out). Its function is as follows. Produces ATP from ADP in the presence of a proton gradient across the membrane. The V-type alpha chain is a catalytic subunit. The sequence is that of V-type ATP synthase alpha chain from Treponema denticola (strain ATCC 35405 / DSM 14222 / CIP 103919 / JCM 8153 / KCTC 15104).